The sequence spans 239 residues: Ribonuclease HII (239 aa).

The RNase H type-2 domain maps to 30–221 (GPVAGVDEVG…VRRVATRSNG (192 aa)). A divalent metal cation-binding residues include aspartate 36, glutamate 37, and aspartate 130. The disordered stretch occupies residues 219–239 (SNGAAAAEREADPPQERDGTG). Residues 225–239 (AEREADPPQERDGTG) show a composition bias toward basic and acidic residues.

Belongs to the RNase HII family. Requires Mn(2+) as cofactor. Mg(2+) is required as a cofactor.

The protein resides in the cytoplasm. It catalyses the reaction Endonucleolytic cleavage to 5'-phosphomonoester.. Its function is as follows. Endonuclease that specifically degrades the RNA of RNA-DNA hybrids. The chain is Ribonuclease HII from Mycobacterium marinum (strain ATCC BAA-535 / M).